The chain runs to 203 residues: Imidazoleglycerol-phosphate dehydratase (203 aa).

It belongs to the imidazoleglycerol-phosphate dehydratase family.

It is found in the cytoplasm. The catalysed reaction is D-erythro-1-(imidazol-4-yl)glycerol 3-phosphate = 3-(imidazol-4-yl)-2-oxopropyl phosphate + H2O. It functions in the pathway amino-acid biosynthesis; L-histidine biosynthesis; L-histidine from 5-phospho-alpha-D-ribose 1-diphosphate: step 6/9. This chain is Imidazoleglycerol-phosphate dehydratase, found in Synechococcus sp. (strain RCC307).